Here is a 430-residue protein sequence, read N- to C-terminus: Serine--tRNA ligase (430 aa).

L-serine is bound at residue 231 to 233; the sequence is TSE. 262 to 264 is an ATP binding site; that stretch reads RSE. Position 285 (Glu-285) interacts with L-serine. Residue 349 to 352 coordinates ATP; that stretch reads EISS. Position 385 (Ser-385) interacts with L-serine.

The protein belongs to the class-II aminoacyl-tRNA synthetase family. Type-1 seryl-tRNA synthetase subfamily. In terms of assembly, homodimer. The tRNA molecule binds across the dimer.

The protein localises to the cytoplasm. The catalysed reaction is tRNA(Ser) + L-serine + ATP = L-seryl-tRNA(Ser) + AMP + diphosphate + H(+). It carries out the reaction tRNA(Sec) + L-serine + ATP = L-seryl-tRNA(Sec) + AMP + diphosphate + H(+). The protein operates within aminoacyl-tRNA biosynthesis; selenocysteinyl-tRNA(Sec) biosynthesis; L-seryl-tRNA(Sec) from L-serine and tRNA(Sec): step 1/1. In terms of biological role, catalyzes the attachment of serine to tRNA(Ser). Is also able to aminoacylate tRNA(Sec) with serine, to form the misacylated tRNA L-seryl-tRNA(Sec), which will be further converted into selenocysteinyl-tRNA(Sec). The protein is Serine--tRNA ligase of Roseobacter denitrificans (strain ATCC 33942 / OCh 114) (Erythrobacter sp. (strain OCh 114)).